A 282-amino-acid polypeptide reads, in one-letter code: HTH-type transcriptional activator RhaR (282 aa).

In terms of domain architecture, HTH araC/xylS-type spans 179–277 (DKLITALANS…GMTPSQWRHL (99 aa)). 2 consecutive DNA-binding regions (H-T-H motif) follow at residues 196-217 (DAFC…RAQT) and 244-267 (VSEI…TRET).

As to quaternary structure, binds DNA as a dimer.

The protein resides in the cytoplasm. Functionally, activates expression of the rhaSR operon in response to L-rhamnose. In Salmonella typhi, this protein is HTH-type transcriptional activator RhaR.